The sequence spans 468 residues: Protein translocase subunit SecY (468 aa).

The Cytoplasmic segment spans residues 1–20; the sequence is MGARDVIYAMEKWFPEVERP. The chain crosses the membrane as a helical span at residues 21 to 47; that stretch reads KKHVPLKEKFVWTGLALVLYYVLAEIP. The Extracellular segment spans residues 48–58; it reads VYGIPKKIQDY. An intramembrane region (helical) is located at residues 59–66; sequence FQFLRVVL. A discontinuously helical membrane pass occupies residues 59–87; that stretch reads FQFLRVVLAGRNGSILTLGIGPIVTAGII. An intramembrane segment occupies 67-78; sequence AGRNGSILTLGI. The helical intramembrane region spans 79-87; the sequence is GPIVTAGII. Over 88 to 108 the chain is Cytoplasmic; the sequence is LQLLVGSELIRLDLANPEDRR. The helical transmembrane segment at 109–133 threads the bilayer; it reads FYQALQRVFSVFMCFFEAAIWVLGG. Residues 134–144 lie on the Extracellular side of the membrane; sequence AFGRVGVDVTY. Residues 145 to 169 form a helical membrane-spanning segment; sequence TIATLMIIQLALGGIILIVLDELVS. The Cytoplasmic portion of the chain corresponds to 170-175; sequence KWGIGS. A helical transmembrane segment spans residues 176-194; sequence GISLFIAAGVSQRILTRSL. Residues 195-239 are Extracellular-facing; it reads NPLTDPNIIDPLTGKPAIVGAIPYFIQHILDGDLKGALYRGGSAP. A helical membrane pass occupies residues 240-261; that stretch reads DMIAVTATIIVFLVVVYFESMR. Over 262 to 285 the chain is Cytoplasmic; it reads VEIPLGYRGVTIRGRYPIKFLYVS. Residues 286-307 form a helical membrane-spanning segment; the sequence is NIPIILTFALYANIQLWARVLD. Over 308 to 346 the chain is Extracellular; that stretch reads RFGHPWLGRFDPVTGNPIGGFVLYVIPPRNIFTVIDNPV. The helical transmembrane segment at 347-366 threads the bilayer; that stretch reads RAIIYLILTIIFSLLFGFLW. Residues 367 to 409 are Cytoplasmic-facing; the sequence is VELTGLDARTIARQLQRAGLQIPGFRRDPRTLERVLQKYIPYV. A helical transmembrane segment spans residues 410–428; the sequence is TFWGSLTVALISVLADFLG. Over 429–431 the chain is Extracellular; the sequence is ALG. Residues 432–446 form a helical membrane-spanning segment; the sequence is TGTGILLTVGILYRF. Residues 447 to 468 are Cytoplasmic-facing; sequence YEEIAREQITEMFPALRRLFKG.

Belongs to the SecY/SEC61-alpha family. In terms of assembly, component of the Sec protein translocase complex. Heterotrimer consisting of alpha (SecY), beta (SecG) and gamma (SecE) subunits. The heterotrimers can form oligomers, although 1 heterotrimer is thought to be able to translocate proteins. Interacts with the ribosome. May interact with SecDF, and other proteins may be involved.

It is found in the cell membrane. Its function is as follows. The central subunit of the protein translocation channel SecYEG. Consists of two halves formed by TMs 1-5 and 6-10. These two domains form a lateral gate at the front which open onto the bilayer between TMs 2 and 7, and are clamped together by SecE at the back. The channel is closed by both a pore ring composed of hydrophobic SecY resides and a short helix (helix 2A) on the extracellular side of the membrane which forms a plug. The plug probably moves laterally to allow the channel to open. The ring and the pore may move independently. The polypeptide is Protein translocase subunit SecY (Pyrococcus horikoshii (strain ATCC 700860 / DSM 12428 / JCM 9974 / NBRC 100139 / OT-3)).